Consider the following 261-residue polypeptide: 6-phosphogluconolactonase (261 aa).

This sequence belongs to the glucosamine/galactosamine-6-phosphate isomerase family. 6-phosphogluconolactonase subfamily.

The catalysed reaction is 6-phospho-D-glucono-1,5-lactone + H2O = 6-phospho-D-gluconate + H(+). Its pathway is carbohydrate degradation; pentose phosphate pathway; D-ribulose 5-phosphate from D-glucose 6-phosphate (oxidative stage): step 2/3. Hydrolysis of 6-phosphogluconolactone to 6-phosphogluconate. This is 6-phosphogluconolactonase (pgl) from Streptomyces coelicolor (strain ATCC BAA-471 / A3(2) / M145).